Reading from the N-terminus, the 151-residue chain is Cytochrome c-type biogenesis protein CcmE (151 aa).

Residues 1–9 (MKGLKKKRR) lie on the Cytoplasmic side of the membrane. Residues 10 to 30 (IQIITLAFVALAGSTALIGYA) traverse the membrane as a helical; Signal-anchor for type II membrane protein segment. Residues 31–151 (MRDGINFFRS…FQHTEDQPQG (121 aa)) are Periplasmic-facing. Residues histidine 123 and tyrosine 127 each contribute to the heme site.

It belongs to the CcmE/CycJ family.

It localises to the cell inner membrane. In terms of biological role, heme chaperone required for the biogenesis of c-type cytochromes. Transiently binds heme delivered by CcmC and transfers the heme to apo-cytochromes in a process facilitated by CcmF and CcmH. In Cereibacter sphaeroides (strain ATCC 17025 / ATH 2.4.3) (Rhodobacter sphaeroides), this protein is Cytochrome c-type biogenesis protein CcmE.